Consider the following 305-residue polypeptide: Putative S-adenosyl-L-methionine-dependent methyltransferase MAB_3787 (305 aa).

Residues aspartate 132 and 161-162 (DL) each bind S-adenosyl-L-methionine.

Belongs to the UPF0677 family.

Exhibits S-adenosyl-L-methionine-dependent methyltransferase activity. This Mycobacteroides abscessus (strain ATCC 19977 / DSM 44196 / CCUG 20993 / CIP 104536 / JCM 13569 / NCTC 13031 / TMC 1543 / L948) (Mycobacterium abscessus) protein is Putative S-adenosyl-L-methionine-dependent methyltransferase MAB_3787.